The sequence spans 466 residues: Soluble pyridine nucleotide transhydrogenase (466 aa).

36-45 (EKESSVGGGC) provides a ligand contact to FAD.

This sequence belongs to the class-I pyridine nucleotide-disulfide oxidoreductase family. FAD serves as cofactor.

It localises to the cytoplasm. The enzyme catalyses NAD(+) + NADPH = NADH + NADP(+). Its function is as follows. Conversion of NADPH, generated by peripheral catabolic pathways, to NADH, which can enter the respiratory chain for energy generation. The sequence is that of Soluble pyridine nucleotide transhydrogenase from Vibrio parahaemolyticus serotype O3:K6 (strain RIMD 2210633).